The following is a 589-amino-acid chain: Proline--tRNA ligase (589 aa).

The protein belongs to the class-II aminoacyl-tRNA synthetase family. ProS type 1 subfamily. As to quaternary structure, homodimer.

Its subcellular location is the cytoplasm. The catalysed reaction is tRNA(Pro) + L-proline + ATP = L-prolyl-tRNA(Pro) + AMP + diphosphate. Functionally, catalyzes the attachment of proline to tRNA(Pro) in a two-step reaction: proline is first activated by ATP to form Pro-AMP and then transferred to the acceptor end of tRNA(Pro). As ProRS can inadvertently accommodate and process non-cognate amino acids such as alanine and cysteine, to avoid such errors it has two additional distinct editing activities against alanine. One activity is designated as 'pretransfer' editing and involves the tRNA(Pro)-independent hydrolysis of activated Ala-AMP. The other activity is designated 'posttransfer' editing and involves deacylation of mischarged Ala-tRNA(Pro). The misacylated Cys-tRNA(Pro) is not edited by ProRS. The protein is Proline--tRNA ligase of Nocardioides sp. (strain ATCC BAA-499 / JS614).